Here is a 348-residue protein sequence, read N- to C-terminus: Fe-S cluster assembly protein DRE2 (348 aa).

Residues M1 to L162 form an N-terminal SAM-like domain region. Residues K137 to H170 are disordered. The segment covering Q144 to P163 has biased composition (polar residues). Positions P163–S242 are linker. Position 206 is a phosphoserine (S206). The [2Fe-2S] cluster site is built by C252, C263, C266, and C268. Positions C252–C268 are fe-S binding site A. [4Fe-4S] cluster contacts are provided by C311, C314, C322, and C325. Short sequence motifs (cx2C motif) lie at residues C311–C314 and C322–C325. The interval C311–C325 is fe-S binding site B.

The protein belongs to the anamorsin family. As to quaternary structure, monomer. Interacts with TAH18. Interacts with MIA40. Requires [2Fe-2S] cluster as cofactor. [4Fe-4S] cluster is required as a cofactor.

Its subcellular location is the cytoplasm. It localises to the mitochondrion intermembrane space. Its function is as follows. Component of the cytosolic iron-sulfur (Fe-S) protein assembly (CIA) machinery required for the maturation of extramitochondrial Fe-S proteins. Part of an electron transfer chain functioning in an early step of cytosolic Fe-S biogenesis, facilitating the de novo assembly of a [4Fe-4S] cluster on the scaffold complex CFD1-NBP35. Electrons are transferred to DRE2 from NADPH via the FAD- and FMN-containing protein TAH18. TAH18-DRE2 are also required for the assembly of the diferric tyrosyl radical cofactor of ribonucleotide reductase (RNR), probably by providing electrons for reduction during radical cofactor maturation in the catalytic small subunit RNR2. The protein is Fe-S cluster assembly protein DRE2 of Saccharomyces cerevisiae (strain Lalvin EC1118 / Prise de mousse) (Baker's yeast).